The chain runs to 58 residues: uncharacterized protein (58 aa).

Residues 12 to 32 traverse the membrane as a helical segment; that stretch reads VALVYISVYFFSCISLIVYFF.

It is found in the membrane. This is an uncharacterized protein from Saccharomyces cerevisiae (strain ATCC 204508 / S288c) (Baker's yeast).